The following is a 336-amino-acid chain: Oxaloacetate decarboxylase (336 aa).

The region spanning 10-258 (PIVLDTTVRD…LAAVDLDRIF (249 aa)) is the Pyruvate carboxyltransferase domain. Residues Asp19, His197, and His199 each coordinate Mn(2+).

Belongs to the 4-hydroxy-2-oxovalerate aldolase family. As to quaternary structure, homodimer. It depends on a divalent metal cation as a cofactor.

It carries out the reaction oxaloacetate + H(+) = pyruvate + CO2. With respect to regulation, activity is abolished upon incubation with Chelex and EDTA. Functionally, exhibits oxaloacetate decarboxylase activity. Lacks any detectable aldolase activity with 4-hydroxy-2-oxopentanoate (HOPA), 4-hydroxy-2-oxohexanoate (HOHA) or other 4-hydroxy-2-oxoacids. The sequence is that of Oxaloacetate decarboxylase from Mycobacterium tuberculosis (strain ATCC 25618 / H37Rv).